The primary structure comprises 186 residues: UPF0301 protein Tgr7_2910 (186 aa).

This sequence belongs to the UPF0301 (AlgH) family.

This chain is UPF0301 protein Tgr7_2910, found in Thioalkalivibrio sulfidiphilus (strain HL-EbGR7).